Here is a 220-residue protein sequence, read N- to C-terminus: UPF0319 protein Ent638_1476 (220 aa).

A signal peptide spans 1 to 20 (MKTGIVSAVLALVMPVCVYA).

It belongs to the UPF0319 family.

This chain is UPF0319 protein Ent638_1476, found in Enterobacter sp. (strain 638).